The chain runs to 196 residues: ATP-dependent Clp protease proteolytic subunit (196 aa).

Ser98 functions as the Nucleophile in the catalytic mechanism. Residue His123 is part of the active site.

Belongs to the peptidase S14 family. Fourteen ClpP subunits assemble into 2 heptameric rings which stack back to back to give a disk-like structure with a central cavity, resembling the structure of eukaryotic proteasomes.

The protein localises to the cytoplasm. It carries out the reaction Hydrolysis of proteins to small peptides in the presence of ATP and magnesium. alpha-casein is the usual test substrate. In the absence of ATP, only oligopeptides shorter than five residues are hydrolyzed (such as succinyl-Leu-Tyr-|-NHMec, and Leu-Tyr-Leu-|-Tyr-Trp, in which cleavage of the -Tyr-|-Leu- and -Tyr-|-Trp bonds also occurs).. In terms of biological role, cleaves peptides in various proteins in a process that requires ATP hydrolysis. Has a chymotrypsin-like activity. Plays a major role in the degradation of misfolded proteins. The chain is ATP-dependent Clp protease proteolytic subunit from Anoxybacillus flavithermus (strain DSM 21510 / WK1).